A 415-amino-acid polypeptide reads, in one-letter code: Plant UBX domain-containing protein 16 (415 aa).

The UBA domain maps to 19–69 (QLDEEIVLFRQDQLISSFLEIAVDQTAETARILLQTTDWNIDQAVNLFLTN). In terms of domain architecture, UBX spans 333–413 (DRSVVCSLCV…GLANSLISVT (81 aa)).

This is Plant UBX domain-containing protein 16 from Arabidopsis thaliana (Mouse-ear cress).